The chain runs to 209 residues: Thymidylate kinase (209 aa).

10 to 17 lines the ATP pocket; it reads GLDGAGKS.

The protein belongs to the thymidylate kinase family.

The catalysed reaction is dTMP + ATP = dTDP + ADP. Functionally, phosphorylation of dTMP to form dTDP in both de novo and salvage pathways of dTTP synthesis. The sequence is that of Thymidylate kinase from Francisella tularensis subsp. novicida (strain U112).